A 339-amino-acid polypeptide reads, in one-letter code: 4-amino-5-hydroxymethyl-2-methylpyrimidine phosphate synthase (339 aa).

N6-(pyridoxal phosphate)lysine is present on K62. H66 is a catalytic residue. A pyridoxal 5'-phosphate-binding site is contributed by 115–118 (GEFG). The short motif at 195 to 199 (CCCFC) is the CCCFC; essential for catalytic activity, may be the site of iron coordination element.

The protein belongs to the NMT1/THI5 family. Homodimer. The cofactor is Fe(3+).

The enzyme catalyses N(6)-(pyridoxal phosphate)-L-lysyl-[4-amino-5-hydroxymethyl-2-methylpyrimidine phosphate synthase] + L-histidyl-[4-amino-5-hydroxymethyl-2-methylpyrimidine phosphate synthase] + 2 Fe(3+) + 4 H2O = L-lysyl-[4-amino-5-hydroxymethyl-2-methylpyrimidine phosphate synthase] + (2S)-2-amino-5-hydroxy-4-oxopentanoyl-[4-amino-5-hydroxymethyl-2-methylpyrimidine phosphate synthase] + 4-amino-2-methyl-5-(phosphooxymethyl)pyrimidine + 3-oxopropanoate + 2 Fe(2+) + 2 H(+). It functions in the pathway cofactor biosynthesis; thiamine diphosphate biosynthesis. Its function is as follows. Responsible for the formation of the pyrimidine heterocycle in the thiamine biosynthesis pathway. Catalyzes the formation of hydroxymethylpyrimidine phosphate (HMP-P) from histidine and pyridoxal phosphate (PLP). The protein uses PLP and the active site histidine to form HMP-P, generating an inactive enzyme. The enzyme can only undergo a single turnover, which suggests it is a suicide enzyme. This Candida albicans (strain WO-1) (Yeast) protein is 4-amino-5-hydroxymethyl-2-methylpyrimidine phosphate synthase.